Consider the following 120-residue polypeptide: Large ribosomal subunit protein uL18 (120 aa).

Belongs to the universal ribosomal protein uL18 family. In terms of assembly, part of the 50S ribosomal subunit; part of the 5S rRNA/L5/L18/L25 subcomplex. Contacts the 5S and 23S rRNAs.

This is one of the proteins that bind and probably mediate the attachment of the 5S RNA into the large ribosomal subunit, where it forms part of the central protuberance. The protein is Large ribosomal subunit protein uL18 of Bartonella henselae (strain ATCC 49882 / DSM 28221 / CCUG 30454 / Houston 1) (Rochalimaea henselae).